The following is a 340-amino-acid chain: Geranylgeranyl pyrophosphate synthase atmG (340 aa).

Polar residues predominate over residues 19–48; it reads NLDASYPTSSSLSTEPIDTRSSSPQGSAST. Residues 19–51 are disordered; it reads NLDASYPTSSSLSTEPIDTRSSSPQGSASTPVD. K69, R72, and H101 together coordinate isopentenyl diphosphate. Mg(2+) is bound by residues D108 and D112. Residue R117 participates in dimethylallyl diphosphate binding. R118 provides a ligand contact to isopentenyl diphosphate. The dimethylallyl diphosphate site is built by K195, T196, and Q229. A Mg(2+)-binding site is contributed by D232. Residues N236, K246, and K256 each contribute to the dimethylallyl diphosphate site.

Belongs to the FPP/GGPP synthase family. It depends on Mg(2+) as a cofactor.

It catalyses the reaction isopentenyl diphosphate + dimethylallyl diphosphate = (2E)-geranyl diphosphate + diphosphate. The enzyme catalyses isopentenyl diphosphate + (2E)-geranyl diphosphate = (2E,6E)-farnesyl diphosphate + diphosphate. The catalysed reaction is isopentenyl diphosphate + (2E,6E)-farnesyl diphosphate = (2E,6E,10E)-geranylgeranyl diphosphate + diphosphate. Geranylgeranyl pyrophosphate synthase; part of the ATM1 gene cluster that mediates the biosynthesis of aflatrem, a tremorgenic mycotoxin with acute neurotoxic effects. Synthesis of geranylgeranyl diphosphate (GGPP) by AtmG (a GGPP synthase) precedes condensation of GGPP with indole 3-glycerol phosphate, followed by epoxidation and cyclization by AtmM (a FAD-dependent monooxygenase) and AtmC (a prenyltransferase) to produce paspaline. AtmB is also essential for paspaline production, but its exact role has not been identified yet. AtmP, a cytochrome P450 monooxygenase, subsequently converts paspaline to 13-desoxypaxilline via PC-M6 by removal of the C-30 methyl group and oxidation at C-10. AtmQ, a cytochrome P450 monooxygenase, then catalyzes the oxidation of 13-desoxypaxilline, first at C-7 to produce paspalicine and then at C-13 to form paspalinine. Finally, AtmD prenylates paspalinine to form aflatrem. This chain is Geranylgeranyl pyrophosphate synthase atmG, found in Aspergillus flavus.